A 263-amino-acid polypeptide reads, in one-letter code: 3-deoxy-manno-octulosonate cytidylyltransferase (263 aa).

The protein belongs to the KdsB family.

The protein resides in the cytoplasm. The catalysed reaction is 3-deoxy-alpha-D-manno-oct-2-ulosonate + CTP = CMP-3-deoxy-beta-D-manno-octulosonate + diphosphate. Its pathway is nucleotide-sugar biosynthesis; CMP-3-deoxy-D-manno-octulosonate biosynthesis; CMP-3-deoxy-D-manno-octulosonate from 3-deoxy-D-manno-octulosonate and CTP: step 1/1. It functions in the pathway bacterial outer membrane biogenesis; lipopolysaccharide biosynthesis. In terms of biological role, activates KDO (a required 8-carbon sugar) for incorporation into bacterial lipopolysaccharide in Gram-negative bacteria. This is 3-deoxy-manno-octulosonate cytidylyltransferase from Burkholderia cenocepacia (strain HI2424).